Here is a 1110-residue protein sequence, read N- to C-terminus: Ribosome assembly protein 1 (1110 aa).

Residues 17–262 (SCIRNICIVA…QKLGAKRENL (246 aa)) enclose the tr-type G domain. Residues 26 to 33 (AHVDHGKT), 102 to 106 (DSPGH), and 156 to 159 (NKID) each bind GTP. S431 bears the Phosphoserine mark.

Belongs to the TRAFAC class translation factor GTPase superfamily. Classic translation factor GTPase family.

It localises to the cytoplasm. The catalysed reaction is GTP + H2O = GDP + phosphate + H(+). GTPase activity is stimulated in the presence of 60S subunits. In terms of biological role, GTPase involved in the biogenesis of the 60S ribosomal subunit and translational activation of ribosomes. Together with SDO1, may trigger the GTP-dependent release of TIF6 from 60S pre-ribosomes in the cytoplasm, thereby activating ribosomes for translation competence by allowing 80S ribosome assembly and facilitating TIF6 recycling to the nucleus, where it is required for 60S rRNA processing and nuclear export. Inhibits GTPase activity of ribosome-bound EF-2. The chain is Ribosome assembly protein 1 (RIA1) from Saccharomyces cerevisiae (strain ATCC 204508 / S288c) (Baker's yeast).